The chain runs to 474 residues: Probable aspartate--tRNA ligase, cytoplasmic (474 aa).

L-aspartate is bound at residue E203. An aspartate region spans residues 225 to 228 (QLYK). An L-aspartate-binding site is contributed by R247. ATP-binding positions include 247–249 (RAE), 255–257 (RYL), and E397. S400 and R404 together coordinate L-aspartate. 445–448 (GLER) is an ATP binding site.

It belongs to the class-II aminoacyl-tRNA synthetase family. Type 2 subfamily. In terms of assembly, homodimer.

The protein resides in the cytoplasm. The enzyme catalyses tRNA(Asp) + L-aspartate + ATP = L-aspartyl-tRNA(Asp) + AMP + diphosphate. The protein is Probable aspartate--tRNA ligase, cytoplasmic of Enterocytozoon bieneusi (strain H348) (Microsporidian parasite).